Here is a 614-residue protein sequence, read N- to C-terminus: Threonine--tRNA ligase (614 aa).

An editing domain region spans residues 1-138; the sequence is MRILTIHARK…PLSELSKTIR (138 aa). 2 catalytic regions span residues 195–492 and 196–492; these read NRVN…PYIP and RVND…PYIP. Residues Cys289, His340, and His461 each coordinate Zn(2+).

This sequence belongs to the class-II aminoacyl-tRNA synthetase family. In terms of assembly, homodimer. The cofactor is Zn(2+).

It is found in the cytoplasm. The catalysed reaction is tRNA(Thr) + L-threonine + ATP = L-threonyl-tRNA(Thr) + AMP + diphosphate + H(+). In terms of biological role, catalyzes the attachment of threonine to tRNA(Thr) in a two-step reaction: L-threonine is first activated by ATP to form Thr-AMP and then transferred to the acceptor end of tRNA(Thr). Also edits incorrectly charged L-seryl-tRNA(Thr). This Staphylothermus marinus (strain ATCC 43588 / DSM 3639 / JCM 9404 / F1) protein is Threonine--tRNA ligase.